The following is a 458-amino-acid chain: UDP-N-acetylmuramate--L-alanine ligase (458 aa).

Residue 112 to 118 participates in ATP binding; sequence GTHGKTT.

It belongs to the MurCDEF family.

Its subcellular location is the cytoplasm. The catalysed reaction is UDP-N-acetyl-alpha-D-muramate + L-alanine + ATP = UDP-N-acetyl-alpha-D-muramoyl-L-alanine + ADP + phosphate + H(+). It functions in the pathway cell wall biogenesis; peptidoglycan biosynthesis. Cell wall formation. This is UDP-N-acetylmuramate--L-alanine ligase from Syntrophotalea carbinolica (strain DSM 2380 / NBRC 103641 / GraBd1) (Pelobacter carbinolicus).